The chain runs to 239 residues: Peptidyl-tRNA hydrolase (239 aa).

Residue Tyr14 participates in tRNA binding. His19 acts as the Proton acceptor in catalysis. TRNA is bound by residues Phe64, Asn66, and Asn112. A disordered region spans residues 186 to 239 (RTAPPRPSTGTGRPPAKTPARAEEPPAPAASPAPATAPLPDARSPLQKLVDRFK). Positions 193 to 204 (STGTGRPPAKTP) are enriched in low complexity. Residues 210-222 (PPAPAASPAPATA) are compositionally biased toward pro residues.

The protein belongs to the PTH family. Monomer.

The protein localises to the cytoplasm. It carries out the reaction an N-acyl-L-alpha-aminoacyl-tRNA + H2O = an N-acyl-L-amino acid + a tRNA + H(+). Functionally, hydrolyzes ribosome-free peptidyl-tRNAs (with 1 or more amino acids incorporated), which drop off the ribosome during protein synthesis, or as a result of ribosome stalling. In terms of biological role, catalyzes the release of premature peptidyl moieties from peptidyl-tRNA molecules trapped in stalled 50S ribosomal subunits, and thus maintains levels of free tRNAs and 50S ribosomes. This is Peptidyl-tRNA hydrolase from Ruegeria pomeroyi (strain ATCC 700808 / DSM 15171 / DSS-3) (Silicibacter pomeroyi).